The primary structure comprises 723 residues: Fatty acid oxidation complex subunit alpha (723 aa).

Positions 1–189 (MIYQAKTLQV…KVGLLDAIVD (189 aa)) are enoyl-CoA hydratase/isomerase. A substrate-binding site is contributed by D296. The segment at 311–723 (SQDTQHAAVL…FYSAQQVSAL (413 aa)) is 3-hydroxyacyl-CoA dehydrogenase. Residues M325, D344, 401 to 403 (VVE), K408, and S430 contribute to the NAD(+) site. H451 functions as the For 3-hydroxyacyl-CoA dehydrogenase activity in the catalytic mechanism. N454 contributes to the NAD(+) binding site. Residues N501 and Y661 each contribute to the substrate site.

The protein in the N-terminal section; belongs to the enoyl-CoA hydratase/isomerase family. In the C-terminal section; belongs to the 3-hydroxyacyl-CoA dehydrogenase family. As to quaternary structure, heterotetramer of two alpha chains (FadB) and two beta chains (FadA).

The catalysed reaction is a (3S)-3-hydroxyacyl-CoA + NAD(+) = a 3-oxoacyl-CoA + NADH + H(+). It catalyses the reaction a (3S)-3-hydroxyacyl-CoA = a (2E)-enoyl-CoA + H2O. It carries out the reaction a 4-saturated-(3S)-3-hydroxyacyl-CoA = a (3E)-enoyl-CoA + H2O. The enzyme catalyses (3S)-3-hydroxybutanoyl-CoA = (3R)-3-hydroxybutanoyl-CoA. The catalysed reaction is a (3Z)-enoyl-CoA = a 4-saturated (2E)-enoyl-CoA. It catalyses the reaction a (3E)-enoyl-CoA = a 4-saturated (2E)-enoyl-CoA. Its pathway is lipid metabolism; fatty acid beta-oxidation. Functionally, involved in the aerobic and anaerobic degradation of long-chain fatty acids via beta-oxidation cycle. Catalyzes the formation of 3-oxoacyl-CoA from enoyl-CoA via L-3-hydroxyacyl-CoA. It can also use D-3-hydroxyacyl-CoA and cis-3-enoyl-CoA as substrate. This is Fatty acid oxidation complex subunit alpha from Vibrio cholerae serotype O1 (strain ATCC 39315 / El Tor Inaba N16961).